Consider the following 151-residue polypeptide: Transcriptional regulator MraZ (151 aa).

2 SpoVT-AbrB domains span residues 5–52 (ANAI…PLSE) and 81–124 (AVDL…DEDA).

It belongs to the MraZ family. In terms of assembly, forms oligomers.

It is found in the cytoplasm. The protein localises to the nucleoid. This chain is Transcriptional regulator MraZ, found in Pseudomonas savastanoi pv. phaseolicola (strain 1448A / Race 6) (Pseudomonas syringae pv. phaseolicola (strain 1448A / Race 6)).